A 193-amino-acid polypeptide reads, in one-letter code: uncharacterized protein (193 aa).

An AMMECR1 domain is found at 1–189 (MDKKEYCYYC…CTYEEYLHNL (189 aa)).

This is an uncharacterized protein from Schizosaccharomyces pombe (strain 972 / ATCC 24843) (Fission yeast).